A 354-amino-acid chain; its full sequence is Uroporphyrinogen decarboxylase (354 aa).

Substrate contacts are provided by residues arginine 27–arginine 31, aspartate 77, tyrosine 154, threonine 209, and histidine 327.

The protein belongs to the uroporphyrinogen decarboxylase family. Homodimer.

Its subcellular location is the cytoplasm. It carries out the reaction uroporphyrinogen III + 4 H(+) = coproporphyrinogen III + 4 CO2. Its pathway is porphyrin-containing compound metabolism; protoporphyrin-IX biosynthesis; coproporphyrinogen-III from 5-aminolevulinate: step 4/4. Catalyzes the decarboxylation of four acetate groups of uroporphyrinogen-III to yield coproporphyrinogen-III. This is Uroporphyrinogen decarboxylase from Hydrogenovibrio crunogenus (strain DSM 25203 / XCL-2) (Thiomicrospira crunogena).